The following is an 825-amino-acid chain: Endoglucanase C (825 aa).

The N-terminal stretch at 1–28 is a signal peptide; it reads MRNKLRRLLAIMMAVLLITSLFAPMVSA. Catalysis depends on Glu-219, which acts as the Proton donor. The active-site Nucleophile is the Glu-335. The span at 607–621 shows a compositional bias: basic and acidic residues; the sequence is DRESVPEPVEHDTKG. The disordered stretch occupies residues 607-635; that stretch reads DRESVPEPVEHDTKGDSALPSDFEDGTRQ.

The protein belongs to the glycosyl hydrolase 5 (cellulase A) family.

The catalysed reaction is Endohydrolysis of (1-&gt;4)-beta-D-glucosidic linkages in cellulose, lichenin and cereal beta-D-glucans.. The sequence is that of Endoglucanase C (celC) from Evansella cellulosilytica (strain ATCC 21833 / DSM 2522 / FERM P-1141 / JCM 9156 / N-4) (Bacillus cellulosilyticus).